A 322-amino-acid polypeptide reads, in one-letter code: Phosphatidylglycerol--prolipoprotein diacylglyceryl transferase (322 aa).

Transmembrane regions (helical) follow at residues Val-23–Trp-43, Phe-53–Val-73, and Gly-97–Phe-117. Arg-143 provides a ligand contact to a 1,2-diacyl-sn-glycero-3-phospho-(1'-sn-glycerol). Transmembrane regions (helical) follow at residues Pro-191–Ile-211 and Leu-250–Ala-270.

The protein belongs to the Lgt family.

The protein resides in the cell membrane. It carries out the reaction L-cysteinyl-[prolipoprotein] + a 1,2-diacyl-sn-glycero-3-phospho-(1'-sn-glycerol) = an S-1,2-diacyl-sn-glyceryl-L-cysteinyl-[prolipoprotein] + sn-glycerol 1-phosphate + H(+). It functions in the pathway protein modification; lipoprotein biosynthesis (diacylglyceryl transfer). Catalyzes the transfer of the diacylglyceryl group from phosphatidylglycerol to the sulfhydryl group of the N-terminal cysteine of a prolipoprotein, the first step in the formation of mature lipoproteins. This Mycoplasmopsis pulmonis (strain UAB CTIP) (Mycoplasma pulmonis) protein is Phosphatidylglycerol--prolipoprotein diacylglyceryl transferase.